Here is a 179-residue protein sequence, read N- to C-terminus: MSRIGKMPIPLSNQAKIEIKDSNIRVSGPKGTLEQRLTDQVTVSEENGLVTVLRIDDSKKAKAQHGLYRMLISNMVDGVTKGFTRKLEIAGVGYRAELKNDLLALTLGYSHMIYFKAPDEIKIEVPDQVTVLVSGIDKALVGQVAAKIRSFRKPEPYRGKGIKYEGEVIRRKEGKAAGK.

The protein belongs to the universal ribosomal protein uL6 family. As to quaternary structure, part of the 50S ribosomal subunit.

Its function is as follows. This protein binds to the 23S rRNA, and is important in its secondary structure. It is located near the subunit interface in the base of the L7/L12 stalk, and near the tRNA binding site of the peptidyltransferase center. This Pelodictyon phaeoclathratiforme (strain DSM 5477 / BU-1) protein is Large ribosomal subunit protein uL6.